The chain runs to 495 residues: Probable cytosol aminopeptidase (495 aa).

Residues K258 and D263 each coordinate Mn(2+). K270 is a catalytic residue. The Mn(2+) site is built by D281, D340, and E342. The active site involves R344.

This sequence belongs to the peptidase M17 family. Mn(2+) is required as a cofactor.

The protein resides in the cytoplasm. It catalyses the reaction Release of an N-terminal amino acid, Xaa-|-Yaa-, in which Xaa is preferably Leu, but may be other amino acids including Pro although not Arg or Lys, and Yaa may be Pro. Amino acid amides and methyl esters are also readily hydrolyzed, but rates on arylamides are exceedingly low.. It carries out the reaction Release of an N-terminal amino acid, preferentially leucine, but not glutamic or aspartic acids.. In terms of biological role, presumably involved in the processing and regular turnover of intracellular proteins. Catalyzes the removal of unsubstituted N-terminal amino acids from various peptides. In Leptospira interrogans serogroup Icterohaemorrhagiae serovar Lai (strain 56601), this protein is Probable cytosol aminopeptidase.